The sequence spans 363 residues: UDP-N-acetylenolpyruvoylglucosamine reductase (363 aa).

The 171-residue stretch at 27–197 (LGGWATRVVT…LSVDFRLARS (171 aa)) folds into the FAD-binding PCMH-type domain. The active site involves Arg-175. Catalysis depends on Ser-252, which acts as the Proton donor. Residue Glu-355 is part of the active site.

The protein belongs to the MurB family. The cofactor is FAD.

It is found in the cytoplasm. The catalysed reaction is UDP-N-acetyl-alpha-D-muramate + NADP(+) = UDP-N-acetyl-3-O-(1-carboxyvinyl)-alpha-D-glucosamine + NADPH + H(+). The protein operates within cell wall biogenesis; peptidoglycan biosynthesis. Functionally, cell wall formation. The protein is UDP-N-acetylenolpyruvoylglucosamine reductase of Salinispora arenicola (strain CNS-205).